We begin with the raw amino-acid sequence, 313 residues long: Thiamine thiazole synthase (313 aa).

Residues A71, 92-93 (EA), G100, and V165 each bind substrate. 2,3-didehydroalanine (Cys) is present on C199. Residues D201, H216, M268, and 278 to 280 (RMG) each bind substrate.

Belongs to the THI4 family. In terms of assembly, homooctamer. It depends on Fe cation as a cofactor. In terms of processing, during the catalytic reaction, a sulfide is transferred from Cys-199 to a reaction intermediate, generating a dehydroalanine residue.

Its subcellular location is the cytoplasm. It is found in the nucleus. The catalysed reaction is [ADP-thiazole synthase]-L-cysteine + glycine + NAD(+) = [ADP-thiazole synthase]-dehydroalanine + ADP-5-ethyl-4-methylthiazole-2-carboxylate + nicotinamide + 3 H2O + 2 H(+). Functionally, involved in biosynthesis of the thiamine precursor thiazole. Catalyzes the conversion of NAD and glycine to adenosine diphosphate 5-(2-hydroxyethyl)-4-methylthiazole-2-carboxylic acid (ADT), an adenylated thiazole intermediate. The reaction includes an iron-dependent sulfide transfer from a conserved cysteine residue of the protein to a thiazole intermediate. The enzyme can only undergo a single turnover, which suggests it is a suicide enzyme. May have additional roles in adaptation to various stress conditions and in DNA damage tolerance. The sequence is that of Thiamine thiazole synthase from Coprinopsis cinerea (strain Okayama-7 / 130 / ATCC MYA-4618 / FGSC 9003) (Inky cap fungus).